We begin with the raw amino-acid sequence, 510 residues long: Facilitated glucose transporter protein 1 (510 aa).

A disordered region spans residues 1–29 (MSEKSRSDTSATASLSDSSKSPSSYSTPG). Residues 1-46 (MSEKSRSDTSATASLSDSSKSPSSYSTPGTTTQKIIFPDGKLTKCL) are Cytoplasmic-facing. Positions 8 to 29 (DTSATASLSDSSKSPSSYSTPG) are enriched in low complexity. Residues 47–67 (AFSAFVITLASFQFGYHIGCV) form a helical membrane-spanning segment. Residues 68-100 (NAPGGLITEWIIGSHKDLFDKELSRENADLAWS) lie on the Extracellular side of the membrane. A helical membrane pass occupies residues 101-121 (VAVSVFAVGGMIGGLSSGWLA). Topologically, residues 122 to 127 (DKVGRR) are cytoplasmic. A helical membrane pass occupies residues 128–146 (GALFYNNLLALAAAALMGL). The Extracellular portion of the chain corresponds to 147 to 160 (AKSVGAYPMVILGR). Residues 161-181 (LIIGLNCGFSSALVPMFLTEI) traverse the membrane as a helical segment. The Cytoplasmic portion of the chain corresponds to 182–195 (SPNNLRGMLGSLHQ). Residue Gln195 coordinates D-glucose. Residues 196–216 (LLVTIAILVSQIFGLPHLLGT) traverse the membrane as a helical segment. The Extracellular portion of the chain corresponds to 217-219 (GDR). A helical membrane pass occupies residues 220 to 240 (WPLIFAFTVVPAVLQLALLML). The Cytoplasmic segment spans residues 241–299 (CPESPKYTMAVRGQRNEAESALKKLRDTEDVSTEIEAMQEEATAAGVQEKPKMGDMFKG). The chain crosses the membrane as a helical span at residues 300 to 320 (ALLWPMSIAIMMMLAQQLSGI). D-glucose contacts are provided by residues 315-316 (QQ), Asn321, and Asn352. Residues 321 to 341 (NVAMFYSTVIFRGAGLTGNEP) are Extracellular-facing. A helical transmembrane segment spans residues 342 to 362 (FYATIGMGAVNVIMTLISVWL). At 363-373 (VDHPKFGRRSL) the chain is on the cytoplasmic side. A helical membrane pass occupies residues 374 to 394 (LLAGLTGMFVSTLLLVGALTI). Residues 395–409 (QNSGGDKWASYSAIG) lie on the Extracellular side of the membrane. Residues 410 to 430 (FVLLFVISFATGPGAIPWFFV) traverse the membrane as a helical segment. Trp427 lines the D-glucose pocket. Topologically, residues 431-445 (SEIFDSSARGNANSI) are cytoplasmic. Residues 446–464 (AVMVNWAANLLVGLTFLPI) traverse the membrane as a helical segment. Residues 465 to 470 (NNLMQQ) are Extracellular-facing. Residues 471–491 (YSFFIFSGFLAFFIFYTWKFV) traverse the membrane as a helical segment. The Cytoplasmic segment spans residues 492–510 (PETKGKSIEQIQAEFEKRK).

The protein belongs to the major facilitator superfamily. Sugar transporter (TC 2.A.1.1) family. Glucose transporter subfamily. In terms of tissue distribution, isoform a is expressed in pharyngeal muscle and intestinal cells in both embryos and adults (at protein level).

It is found in the cell membrane. It localises to the basolateral cell membrane. In terms of biological role, facilitative glucose transporter that plays a role in glucose metabolism and regulation of longevity. May also play a role in lipid metabolism. Glucose transport activity of isoform a is competitively inhibited by mannose, galactose and fructose, suggesting ability to transport also other hexose sugars. The sequence is that of Facilitated glucose transporter protein 1 from Caenorhabditis elegans.